Here is a 550-residue protein sequence, read N- to C-terminus: Coiled-coil domain-containing protein 60 (550 aa).

A disordered region spans residues 1 to 21 (MTKVPATKKLQSSPNSGAVRP). Residues 71–98 (AILREETAKKKKQQQLQKLKEEERNKFQ) are a coiled coil. Disordered regions lie at residues 219–293 (KFKI…EPLY) and 336–367 (AYKE…KKSK). Low complexity predominate over residues 235 to 256 (RGSTLSLSRASGGSSPQSSMIS). Residues 336–345 (AYKEMQTTLK) show a composition bias toward polar residues.

The sequence is that of Coiled-coil domain-containing protein 60 (CCDC60) from Homo sapiens (Human).